The sequence spans 461 residues: V-type ATP synthase beta chain (461 aa).

This sequence belongs to the ATPase alpha/beta chains family.

Produces ATP from ADP in the presence of a proton gradient across the membrane. The V-type beta chain is a regulatory subunit. The sequence is that of V-type ATP synthase beta chain from Streptococcus pneumoniae serotype 19F (strain G54).